A 1115-amino-acid chain; its full sequence is Disheveled-associated activator of morphogenesis 2 (1115 aa).

In terms of domain architecture, GBD/FH3 spans 40 to 416 (GPIPNPEELN…QIVLQDERGV (377 aa)). A coiled-coil region spans residues 434–515 (MLINENEVKQ…ELVARHNESS (82 aa)). 2 disordered regions span residues 510 to 605 (RHNE…SHPL) and 655 to 697 (QEGP…SATG). The region spanning 518 to 694 (PVSSPPPPGG…TEKASRSMVS (177 aa)) is the FH1 domain. Residues 540–583 (LPPPPPPLPFDSCPPPPAPPLPPGGPPIPPGAPPCFSSGPPPSH) show a composition bias toward pro residues. The region spanning 595–1042 (KKRIPQPSHP…DERRARMEFM (448 aa)) is the FH2 domain. Positions 1065 to 1095 (EESGEFDDLVSALRSGEVFDKDLSKFKRNRK) constitute a DAD domain.

This sequence belongs to the formin homology family. As to quaternary structure, interacts with DVL3. Interacts with INF2. In early embryogenesis, expression is confined to embryonic ectoderm. Highly dynamic expression in later stages of gastrulation. In early somite stages, detected in posterior node and persists until 9-10 somites have developed when expression is concentrated in the chordoneural hinge. During organogenesis, expressed in the CNS, PNS, liver primordia, limb buds and genital tubercle.

In terms of biological role, key regulator of the Wnt signaling pathway, which is required for various processes during development, such as dorsal patterning, determination of left/right symmetry or myelination in the central nervous system. Acts downstream of Wnt ligands and upstream of beta-catenin (CTNNB1). Required for canonical Wnt signaling pathway during patterning in the dorsal spinal cord by promoting the aggregation of Disheveled (Dvl) complexes, thereby clustering and formation of Wnt receptor signalosomes and potentiating Wnt activity. During dorsal patterning of the spinal cord, inhibits oligodendrocytes differentiation via interaction with PIP5K1A. Also regulates non-canonical Wnt signaling pathway. Acts downstream of PITX2 in the developing gut and is required for left/right asymmetry within dorsal mesentery: affects mesenchymal condensation by lengthening cadherin-based junctions through WNT5A and non-canonical Wnt signaling, inducing polarized condensation in the left dorsal mesentery necessary to initiate gut rotation. Together with DAAM1, required for myocardial maturation and sarcomere assembly. Is a regulator of actin nucleation and elongation, filopodia formation and podocyte migration. In Mus musculus (Mouse), this protein is Disheveled-associated activator of morphogenesis 2.